Here is a 707-residue protein sequence, read N- to C-terminus: Tubulin polyglutamylase ttll-11 (707 aa).

The 365-residue stretch at 124-488 (RFTIDTSRAK…PLVRDTLLLV (365 aa)) folds into the TTL domain. ATP is bound by residues 279 to 282 (QEYV), K293, and D295. Residues 675-707 (RNRSGTNGRKQNFTDDNNNPNSFAHLPKINERL) form a disordered region. A compositionally biased stretch (polar residues) spans 677 to 696 (RSGTNGRKQNFTDDNNNPNS).

Belongs to the tubulin--tyrosine ligase family. As to expression, expressed in amphid sensory neurons. Weakly expressed in body wall muscles. Isoform a: Specifically expressed in ciliated sensory neurons in the head, including the IL1s, OLQ, head CEP, and amphid neurons. In the male tail, expressed in HOA, RnA, and phasmid neurons. Isoform b: Specifically expressed in male and hermaphrodite IL2 ciliated sensory neurons, and in male-specific CEM, HOB and RnB ciliated sensory neurons.

It localises to the cell projection. The protein localises to the axon. Its subcellular location is the perikaryon. It is found in the dendrite. The protein resides in the cilium. It localises to the extracellular vesicle. The enzyme catalyses L-glutamyl-[protein] + L-glutamate + ATP = gamma-L-glutamyl-L-glutamyl-[protein] + ADP + phosphate + H(+). Polyglutamylase which preferentially modifies tubulin. Involved in the side-chain initiation step of the polyglutamylation reaction. By controlling tubulin glutamylation, regulates ciliary specialization and motor-based transport. Promotes the formation of A and B tubule singlets by splaying microtubule doublets in cilia. Together with ttll-4 and 5, required for male mating. Functionally, specifically promotes tubulin glutamylation in a subset of ciliated neurons including amphid, phasmid, CEP and RnA neurons. Its function is as follows. Specifically promotes tubulin glutamylation in male ciliated CEM, HOB and RnB neurons that release bioactive extracellular vesicles. Regulates the localization of TRP channel pdk-2 in male CEM, HOB and RnB neurons. Regulates the environmental release of bioactive extracellular vesicles in cilia. This chain is Tubulin polyglutamylase ttll-11, found in Caenorhabditis elegans.